Here is a 496-residue protein sequence, read N- to C-terminus: 1-aminocyclopropane-1-carboxylate synthase 2 (496 aa).

2 residues coordinate substrate: E55 and Y93. The residue at position 279 (K279) is an N6-(pyridoxal phosphate)lysine. Phosphoserine occurs at positions 483, 488, and 491.

The protein belongs to the class-I pyridoxal-phosphate-dependent aminotransferase family. As to quaternary structure, homodimer and heterodimer. In vivo, the relevance of heterodimerization with other ACS enzymes is however unsure. Interacts with GRF3. Pyridoxal 5'-phosphate serves as cofactor. In terms of processing, phosphorylated on serine residue by MAP kinase (MPK6). Post-translationally, may be processed at its C-terminus. As to expression, high in developing leaves and in flowers. Expressed in roots and siliques.

It carries out the reaction S-adenosyl-L-methionine = 1-aminocyclopropane-1-carboxylate + S-methyl-5'-thioadenosine + H(+). Its pathway is alkene biosynthesis; ethylene biosynthesis via S-adenosyl-L-methionine; ethylene from S-adenosyl-L-methionine: step 1/2. 1-aminocyclopropane-1-carboxylate synthase (ACS) enzymes catalyze the conversion of S-adenosyl-L-methionine (SAM) into 1-aminocyclopropane-1-carboxylate (ACC), a direct precursor of ethylene. In Arabidopsis thaliana (Mouse-ear cress), this protein is 1-aminocyclopropane-1-carboxylate synthase 2 (ACS2).